A 335-amino-acid chain; its full sequence is Glycerol-3-phosphate dehydrogenase [NAD(P)+] (335 aa).

3 residues coordinate NADPH: Trp-11, Arg-30, and Lys-106. The sn-glycerol 3-phosphate site is built by Lys-106, Gly-135, and Ser-137. Ala-139 provides a ligand contact to NADPH. The sn-glycerol 3-phosphate site is built by Lys-190, Asp-243, Ser-253, Arg-254, and Asn-255. Lys-190 acts as the Proton acceptor in catalysis. Residue Arg-254 coordinates NADPH. Val-278 and Glu-280 together coordinate NADPH.

This sequence belongs to the NAD-dependent glycerol-3-phosphate dehydrogenase family.

Its subcellular location is the cytoplasm. It catalyses the reaction sn-glycerol 3-phosphate + NAD(+) = dihydroxyacetone phosphate + NADH + H(+). The catalysed reaction is sn-glycerol 3-phosphate + NADP(+) = dihydroxyacetone phosphate + NADPH + H(+). It participates in membrane lipid metabolism; glycerophospholipid metabolism. Catalyzes the reduction of the glycolytic intermediate dihydroxyacetone phosphate (DHAP) to sn-glycerol 3-phosphate (G3P), the key precursor for phospholipid synthesis. The polypeptide is Glycerol-3-phosphate dehydrogenase [NAD(P)+] (Paucimonas lemoignei (Pseudomonas lemoignei)).